A 102-amino-acid polypeptide reads, in one-letter code: uncharacterized protein (102 aa).

[3Fe-4S] cluster-binding residues include cysteine 10, cysteine 16, and cysteine 55. Positions 66–102 (DAGDDERASADPARSPAEAERHAAKDQRIPGGHDGTV) are disordered. The span at 82–93 (AEAERHAAKDQR) shows a compositional bias: basic and acidic residues.

The cofactor is [3Fe-4S] cluster.

In terms of biological role, electron transport protein for the cytochrome systems. This is an uncharacterized protein from Sinorhizobium fredii (strain NBRC 101917 / NGR234).